Here is a 790-residue protein sequence, read N- to C-terminus: MPLRNQNRAPLPSPNVKKEALSSIPFDKRRKETQGTGRRQVLSTVNRQDANSDVGSTEECGKVEFTKDEVLALLNERAKAGKFDTKGKIEQMTDIIKKLKVCVRWYQQVDETHVQDKENLSSSLQSAEKRYSDKELDAKTKEEELRATITEMKENIESLQEKLSKEKLSKLDAIENHRREKDCRVVAEKLQVSLREELDKVKEEKMAAKQKVTSLEDMYKRLQEYNTSLQQYNTKLQTDLEVAREAHTRAEKEKSSILENLTTLRGHSKSLQDQLASSRVSQDEAVKQKDSLLMEVNNLQSELQQVRDDRDRHVVQSQKLAGEILMYKESVGKSSHELDILIAKSGSLEETCSLQKERIKMLEQELAFAKEKLKMVDLSMSHTMTEFEEQKQCMHELQDRLADTERQLFEGELLRKKLHNTILELKGNIRVFCRVRPLLPDDGGRQEASVIAYPTSTESLGRGIDVVQSGNKHPFTFDKVFDHGASQEEVFFEISQLVQSALDGYKVCIFAYGQTGSGKTYTMMGRPETPEQKGLIPRSLEQIFKTSQSLSTQGWKYKMQVSMLEIYNESIRDLLSTSRTIAIESVRADSSTSGRQYTITHDVNGNTHVSDLTIVDVCSIGQISSLLQQAAQSRSVGKTHMNEQSSRSHFVFTLRISGVNESTEQQVQGVLNLIDLAGSERLSRSGATGDRLKETQAINKSLSALSDVIFALAKKEDHVPFRNSKLTYLLQPCLGGDSKTLMFVNISPDPSSTGESLCSLRFAARVNACEIGIPRRQTSAKLLDSRLSYG.

Disordered regions lie at residues 1 to 56 and 116 to 139; these read MPLR…DVGS and DKEN…LDAK. Positions 1 to 66 are globular; the sequence is MPLRNQNRAP…TEECGKVEFT (66 aa). Over residues 16–33 the composition is skewed to basic and acidic residues; that stretch reads VKKEALSSIPFDKRRKET. Polar residues predominate over residues 34-55; it reads QGTGRRQVLSTVNRQDANSDVG. Coiled-coil stretches lie at residues 117–316 and 347–426; these read KENL…HVVQ and SLEE…LELK. The segment covering 127 to 139 has biased composition (basic and acidic residues); it reads AEKRYSDKELDAK. The Kinesin motor domain maps to 428–769; sequence NIRVFCRVRP…LRFAARVNAC (342 aa). Position 513 to 520 (513 to 520) interacts with ATP; that stretch reads GQTGSGKT.

It belongs to the TRAFAC class myosin-kinesin ATPase superfamily. Kinesin family. KIN-14 subfamily. As to expression, slightly expressed in anther lobes with pollen mother cells at anther stage 5. Strongly expressed at anther stage 6 in the tapetum and meiotic cells. Also detected in the gynoecium and the ovule.

Its subcellular location is the cytoplasm. It is found in the cytoskeleton. The protein localises to the phragmoplast. Its function is as follows. Kinesin that supports microtubule movement in an ATP-dependent manner and that functions as a minus-end directed motor as well as a plus-end tracking protein. During mitosis, is involved in early spindle assembly. Participates in the capture of antiparallel interpolar microtubules and helps in generating force to coalign microtubules. The polypeptide is Kinesin-like protein KIN-14D (Arabidopsis thaliana (Mouse-ear cress)).